The following is a 312-amino-acid chain: Methionyl-tRNA formyltransferase (312 aa).

A (6S)-5,6,7,8-tetrahydrofolate-binding site is contributed by 109 to 112 (SLLP).

It belongs to the Fmt family.

The enzyme catalyses L-methionyl-tRNA(fMet) + (6R)-10-formyltetrahydrofolate = N-formyl-L-methionyl-tRNA(fMet) + (6S)-5,6,7,8-tetrahydrofolate + H(+). Functionally, attaches a formyl group to the free amino group of methionyl-tRNA(fMet). The formyl group appears to play a dual role in the initiator identity of N-formylmethionyl-tRNA by promoting its recognition by IF2 and preventing the misappropriation of this tRNA by the elongation apparatus. The chain is Methionyl-tRNA formyltransferase from Listeria monocytogenes serotype 4a (strain HCC23).